Reading from the N-terminus, the 415-residue chain is Gamma-glutamyl phosphate reductase (415 aa).

This sequence belongs to the gamma-glutamyl phosphate reductase family.

It localises to the cytoplasm. The catalysed reaction is L-glutamate 5-semialdehyde + phosphate + NADP(+) = L-glutamyl 5-phosphate + NADPH + H(+). It functions in the pathway amino-acid biosynthesis; L-proline biosynthesis; L-glutamate 5-semialdehyde from L-glutamate: step 2/2. Its function is as follows. Catalyzes the NADPH-dependent reduction of L-glutamate 5-phosphate into L-glutamate 5-semialdehyde and phosphate. The product spontaneously undergoes cyclization to form 1-pyrroline-5-carboxylate. This is Gamma-glutamyl phosphate reductase from Bacillus velezensis (strain DSM 23117 / BGSC 10A6 / LMG 26770 / FZB42) (Bacillus amyloliquefaciens subsp. plantarum).